Consider the following 132-residue polypeptide: Small ribosomal subunit protein uS8 (132 aa).

Belongs to the universal ribosomal protein uS8 family. In terms of assembly, part of the 30S ribosomal subunit. Contacts proteins S5 and S12.

Its function is as follows. One of the primary rRNA binding proteins, it binds directly to 16S rRNA central domain where it helps coordinate assembly of the platform of the 30S subunit. The sequence is that of Small ribosomal subunit protein uS8 from Clostridium beijerinckii (strain ATCC 51743 / NCIMB 8052) (Clostridium acetobutylicum).